The chain runs to 176 residues: Small ribosomal subunit protein uS8c (176 aa).

The protein belongs to the universal ribosomal protein uS8 family. In terms of assembly, part of the 30S ribosomal subunit.

Its subcellular location is the plastid. The protein resides in the chloroplast. In terms of biological role, one of the primary rRNA binding proteins, it binds directly to 16S rRNA central domain where it helps coordinate assembly of the platform of the 30S subunit. This chain is Small ribosomal subunit protein uS8c (rps8), found in Stigeoclonium helveticum (Green alga).